The following is a 287-amino-acid chain: Leucine-rich repeat-containing protein 72 (287 aa).

LRR repeat units follow at residues 46–67 (DVFE…SRFK), 68–89 (KLKY…TRNY), 90–111 (CLTE…HYLP), and 112–133 (SLHI…VKEL). The LRRCT domain maps to 147–185 (NPLCQYNLYRLYIIYHLPGVELLDRNQVTEKERRSMITI).

The sequence is that of Leucine-rich repeat-containing protein 72 (LRRC72) from Homo sapiens (Human).